A 1053-amino-acid polypeptide reads, in one-letter code: Middle cell wall protein (1053 aa).

An N-terminal signal peptide occupies residues 1-23; the sequence is MKKVVNSVLASALALTVAPMAFA. SLH domains are found at residues 26–89, 90–153, and 154–203; these read EAAT…KLAQ, FSNT…KGVW, and PNSM…FGTD.

As to quaternary structure, the middle cell wall layer is composed of subunits of the middle cell wall protein. These proteins form a hexagonal array with a lattice constant of 14.5 nM in the middle cell wall layers.

The protein localises to the secreted. It is found in the cell wall. The protein resides in the S-layer. In terms of biological role, the middle wall protein binds to peptidoglycan and to the outer cell wall protein. The polypeptide is Middle cell wall protein (Brevibacillus brevis (strain 47 / JCM 6285 / NBRC 100599)).